Here is a 135-residue protein sequence, read N- to C-terminus: UPF0299 membrane protein Spro_1570 (135 aa).

4 helical membrane passes run 4–24, 30–50, 63–83, and 93–113; these read LFTL…CLFA, ALLP…FALL, GCHL…VGVM, and LGPL…VVGY.

It belongs to the UPF0299 family.

It localises to the cell inner membrane. The protein is UPF0299 membrane protein Spro_1570 of Serratia proteamaculans (strain 568).